We begin with the raw amino-acid sequence, 267 residues long: Tryptophan synthase alpha chain (267 aa).

Catalysis depends on proton acceptor residues Glu49 and Asp60.

It belongs to the TrpA family. In terms of assembly, tetramer of two alpha and two beta chains.

The catalysed reaction is (1S,2R)-1-C-(indol-3-yl)glycerol 3-phosphate + L-serine = D-glyceraldehyde 3-phosphate + L-tryptophan + H2O. Its pathway is amino-acid biosynthesis; L-tryptophan biosynthesis; L-tryptophan from chorismate: step 5/5. Functionally, the alpha subunit is responsible for the aldol cleavage of indoleglycerol phosphate to indole and glyceraldehyde 3-phosphate. This chain is Tryptophan synthase alpha chain, found in Citrifermentans bemidjiense (strain ATCC BAA-1014 / DSM 16622 / JCM 12645 / Bem) (Geobacter bemidjiensis).